A 188-amino-acid polypeptide reads, in one-letter code: CyanoP (188 aa).

The first 23 residues, 1–23 (MLKKSLSTAVVLVTLLLSFTLTA), serve as a signal peptide directing secretion. Cys24 carries N-palmitoyl cysteine lipidation. The S-diacylglycerol cysteine moiety is linked to residue Cys24.

This sequence belongs to the PsbP family. CyanoP subfamily. As to quaternary structure, monomer. Present in about 3% of photosystem II (PSII) preparations. Purifies with partially assembled PSII complexes, in addition to a small amount of monomeric and dimeric PSII, and trimeric PSI.

It is found in the cellular thylakoid membrane. Its function is as follows. Plays a role in the early stages of photosystem II (PSII) assembly; binds to D2 (psbD) and may facilitate its incorporation into PSII. Required for optimal photoautotrophic growth in the absence of Ca(2+) or Cl(-), functions in optimizing PSII water oxidation/O(2) evolving activity. Might be involved in assembly of the oxygen evolving complex. This is CyanoP from Synechocystis sp. (strain ATCC 27184 / PCC 6803 / Kazusa).